Consider the following 228-residue polypeptide: Ferric nitrobindin-like protein (228 aa).

A disordered region spans residues 1–21; the sequence is MTSDEVRDGAGSPADSSKGNK. The GXWXGXG motif lies at 75-81; that stretch reads GVWRGEG.

This sequence belongs to the nitrobindin family.

The polypeptide is Ferric nitrobindin-like protein (Mycobacterium leprae (strain TN)).